The sequence spans 540 residues: Chaperonin GroEL (540 aa).

ATP contacts are provided by residues Thr-30 to Pro-33, Lys-51, Asp-87 to Thr-91, Gly-415, and Asp-495.

This sequence belongs to the chaperonin (HSP60) family. Forms a cylinder of 14 subunits composed of two heptameric rings stacked back-to-back. Interacts with the co-chaperonin GroES.

The protein localises to the cytoplasm. It carries out the reaction ATP + H2O + a folded polypeptide = ADP + phosphate + an unfolded polypeptide.. Together with its co-chaperonin GroES, plays an essential role in assisting protein folding. The GroEL-GroES system forms a nano-cage that allows encapsulation of the non-native substrate proteins and provides a physical environment optimized to promote and accelerate protein folding. This chain is Chaperonin GroEL, found in Rhodothermus marinus (Rhodothermus obamensis).